Here is a 249-residue protein sequence, read N- to C-terminus: DNA repair protein RecO (249 aa).

The protein belongs to the RecO family.

Functionally, involved in DNA repair and RecF pathway recombination. The protein is DNA repair protein RecO of Rhodopseudomonas palustris (strain BisB5).